Reading from the N-terminus, the 95-residue chain is Cell division topological specificity factor (95 aa).

The protein belongs to the MinE family.

Prevents the cell division inhibition by proteins MinC and MinD at internal division sites while permitting inhibition at polar sites. This ensures cell division at the proper site by restricting the formation of a division septum at the midpoint of the long axis of the cell. In Microcystis aeruginosa (strain NIES-843 / IAM M-2473), this protein is Cell division topological specificity factor.